A 276-amino-acid chain; its full sequence is MWNNHGGFDGGYGGSGMGGGGGYMQSPGGFGSPAPTQGEKKSRSRSQQIVPCTVSQLLSATQNDEVFRIGEAELSQVTIVGIVRHAEKAPTNILYKVDDMTAAPMDVRQWVDTDEASCENMVVPPGSYVKVAGHLRSFQNKKSVVAFKIAPVEDMNEFVSHMLEVVHAHMAMNSQGAPSGGGSTVALSTPGRVGDSGRAFSGGNDNPTNGLTPHQSQILSLIKSCKGNEGMAFEELKNRLHGMNVNTIRQAVEFLSNEGHIYSTIDDEHYKCTDGD.

Positions 19 to 31 (GGGGYMQSPGGFG) are enriched in gly residues. The interval 19 to 47 (GGGGYMQSPGGFGSPAPTQGEKKSRSRSQ) is disordered. The OB DNA-binding region spans 77-151 (VTIVGIVRHA…KSVVAFKIAP (75 aa)).

This sequence belongs to the replication factor A protein 2 family. Component of the replication protein A complex (RPA/RP-A), a heterotrimeric complex composed of RPA1, RPA2 and RPA3. Differentially phosphorylated throughout the cell cycle, becoming phosphorylated at the G1-S transition and dephosphorylated in late mitosis. Phosphorylation increases upon replication fork stalling.

The protein localises to the nucleus. Its subcellular location is the PML body. As part of the heterotrimeric replication protein A complex (RPA/RP-A), binds and stabilizes single-stranded DNA intermediates, that form during DNA replication or upon DNA stress. It prevents their reannealing and in parallel, recruits and activates different proteins and complexes involved in DNA metabolism. Thereby, it plays an essential role both in DNA replication and the cellular response to DNA damage. This chain is Replication protein A 32 kDa subunit-A (rpa2-a), found in Xenopus laevis (African clawed frog).